The following is a 456-amino-acid chain: 26S proteasome non-ATPase regulatory subunit 12 (456 aa).

Ala-2 is modified (N-acetylalanine). A Glycyl lysine isopeptide (Lys-Gly) (interchain with G-Cter in SUMO1); alternate cross-link involves residue Lys-92. Lys-92 participates in a covalent cross-link: Glycyl lysine isopeptide (Lys-Gly) (interchain with G-Cter in SUMO2); alternate. A PCI domain is found at 242-420 (SICKHYRAIY…GVINFQRPKD (179 aa)). An N6-acetyllysine modification is found at Lys-368.

The protein belongs to the proteasome subunit p55 family. As to quaternary structure, component of the 19S proteasome regulatory particle complex. The 26S proteasome consists of a 20S core particle (CP) and two 19S regulatory subunits (RP). The regulatory particle is made of a lid composed of 9 subunits including PSMD12, a base containing 6 ATPases and few additional components. Interacts with ERCC6.

In terms of biological role, component of the 26S proteasome, a multiprotein complex involved in the ATP-dependent degradation of ubiquitinated proteins. This complex plays a key role in the maintenance of protein homeostasis by removing misfolded or damaged proteins, which could impair cellular functions, and by removing proteins whose functions are no longer required. Therefore, the proteasome participates in numerous cellular processes, including cell cycle progression, apoptosis, or DNA damage repair. The chain is 26S proteasome non-ATPase regulatory subunit 12 (Psmd12) from Mus musculus (Mouse).